The chain runs to 155 residues: 3-hydroxyacyl-[acyl-carrier-protein] dehydratase FabZ (155 aa).

His-58 is an active-site residue.

Belongs to the thioester dehydratase family. FabZ subfamily.

The protein resides in the cytoplasm. It carries out the reaction a (3R)-hydroxyacyl-[ACP] = a (2E)-enoyl-[ACP] + H2O. Involved in unsaturated fatty acids biosynthesis. Catalyzes the dehydration of short chain beta-hydroxyacyl-ACPs and long chain saturated and unsaturated beta-hydroxyacyl-ACPs. The protein is 3-hydroxyacyl-[acyl-carrier-protein] dehydratase FabZ of Rhizobium johnstonii (strain DSM 114642 / LMG 32736 / 3841) (Rhizobium leguminosarum bv. viciae).